The primary structure comprises 65 residues: MKNDHYVFNFYFFRSKITSNHLIRLNTNYLKKTILFISSDIPETIYEKFYLQSFKLFIIYYNINL.

It is found in the plastid. The protein resides in the chloroplast. This is an uncharacterized protein from Guillardia theta (Cryptophyte).